The following is a 348-amino-acid chain: Anthranilate phosphoribosyltransferase (348 aa).

Residues Gly81, Gly84 to Asp85, Asn91 to Thr94, Lys109 to Gly117, and Ser121 each bind 5-phospho-alpha-D-ribose 1-diphosphate. Gly81 contacts anthranilate. Ser93 contributes to the Mg(2+) binding site. Asn112 provides a ligand contact to anthranilate. Arg167 provides a ligand contact to anthranilate. Mg(2+)-binding residues include Asp226 and Glu227.

This sequence belongs to the anthranilate phosphoribosyltransferase family. In terms of assembly, homodimer. Mg(2+) is required as a cofactor.

The enzyme catalyses N-(5-phospho-beta-D-ribosyl)anthranilate + diphosphate = 5-phospho-alpha-D-ribose 1-diphosphate + anthranilate. It functions in the pathway amino-acid biosynthesis; L-tryptophan biosynthesis; L-tryptophan from chorismate: step 2/5. Its function is as follows. Catalyzes the transfer of the phosphoribosyl group of 5-phosphorylribose-1-pyrophosphate (PRPP) to anthranilate to yield N-(5'-phosphoribosyl)-anthranilate (PRA). The sequence is that of Anthranilate phosphoribosyltransferase from Ectopseudomonas mendocina (strain ymp) (Pseudomonas mendocina).